The following is a 232-amino-acid chain: Large ribosomal subunit protein uL1 (232 aa).

It belongs to the universal ribosomal protein uL1 family. As to quaternary structure, part of the 50S ribosomal subunit.

Its function is as follows. Binds directly to 23S rRNA. The L1 stalk is quite mobile in the ribosome, and is involved in E site tRNA release. Functionally, protein L1 is also a translational repressor protein, it controls the translation of the L11 operon by binding to its mRNA. The protein is Large ribosomal subunit protein uL1 of Bacillus cereus (strain ATCC 14579 / DSM 31 / CCUG 7414 / JCM 2152 / NBRC 15305 / NCIMB 9373 / NCTC 2599 / NRRL B-3711).